The following is a 363-amino-acid chain: 3-isopropylmalate dehydrogenase (363 aa).

An NAD(+)-binding site is contributed by 78 to 91 (GKRWDHLPINERPE). Residues Arg99, Arg109, Arg138, and Asp227 each coordinate substrate. 3 residues coordinate Mg(2+): Asp227, Asp251, and Asp255. Residue 285–297 (GSAPDIAGKNTAN) coordinates NAD(+).

This sequence belongs to the isocitrate and isopropylmalate dehydrogenases family. LeuB type 1 subfamily. As to quaternary structure, homodimer. It depends on Mg(2+) as a cofactor. Requires Mn(2+) as cofactor.

The protein localises to the cytoplasm. It catalyses the reaction (2R,3S)-3-isopropylmalate + NAD(+) = 4-methyl-2-oxopentanoate + CO2 + NADH. The protein operates within amino-acid biosynthesis; L-leucine biosynthesis; L-leucine from 3-methyl-2-oxobutanoate: step 3/4. Functionally, catalyzes the oxidation of 3-carboxy-2-hydroxy-4-methylpentanoate (3-isopropylmalate) to 3-carboxy-4-methyl-2-oxopentanoate. The product decarboxylates to 4-methyl-2 oxopentanoate. The protein is 3-isopropylmalate dehydrogenase of Buchnera aphidicola subsp. Uroleucon helianthicola.